The following is a 196-amino-acid chain: Interleukin-23 subunit alpha (196 aa).

Residues 1–21 (MLDCRAIILLWLLPWATQGLA) form the signal peptide.

This sequence belongs to the IL-6 superfamily. In terms of assembly, heterodimer with IL12B; disulfide-linked. The heterodimer is known as interleukin IL-23. Interacts with IL23R; this interaction enables recruitment of IL12RB1.

Its subcellular location is the secreted. Functionally, associates with IL12B to form the pro-inflammatory cytokine IL-23 that plays different roles in innate and adaptive immunity. Released by antigen-presenting cells such as dendritic cells or macrophages, binds to a heterodimeric receptor complex composed of IL12RB1 and IL23R to activate JAK2 and TYK2 which then phosphorylate the receptor to form a docking site leading to the phosphorylation of STAT3 and STAT4. This process leads to activation of several pathways including p38 MAPK or NF-kappa-B and promotes the production of pro-inflammatory cytokines such as interleukin-17A/IL17A. In turn, participates in the early and effective intracellular bacterial clearance. Promotes the expansion and survival of T-helper 17 cells, a CD4-positive helper T-cell subset that produces IL-17, as well as other IL-17-producing cells. In Rattus norvegicus (Rat), this protein is Interleukin-23 subunit alpha (Il23a).